The chain runs to 202 residues: Transmembrane 4 L6 family member 1 (202 aa).

Topologically, residues 1-9 (MCYVKCARY) are cytoplasmic. A helical membrane pass occupies residues 10 to 30 (IGYSLVWAAVFCIVANALLYF). At 31 to 49 (PNGETKYATEDHLSRFVWY) the chain is on the extracellular side. The helical transmembrane segment at 50–70 (FAGIVGGGLLMLLPAFVFIGM) threads the bilayer. Residues 71–93 (DEEDCCGCCGYENYGKRCSMLSS) are Cytoplasmic-facing. A helical transmembrane segment spans residues 94-114 (VLAALIGIVGSAYCVIVASLG). Residues 115–161 (LAEGPKCSDAHGVWNYTFASTEGQYLLNSSMWSKCYEPKHIVEWHVT) are Extracellular-facing. N-linked (GlcNAc...) asparagine glycans are attached at residues Asn129 and Asn142. A helical transmembrane segment spans residues 162–182 (LFSILLAFAAVEFILCLIQVI). Residues 183–202 (NGMLGGLCGYCCSRQQQYNC) lie on the Cytoplasmic side of the membrane.

Belongs to the L6 tetraspanin family. As to quaternary structure, present in high molecular weight complexes in tumor cells. Interacts with SDCBP2. As to expression, highly expressed in skin and lung. Moderately expressed in lymph nodes and kidneys. Also present in thymic stroma and fibroblasts.

It is found in the membrane. The chain is Transmembrane 4 L6 family member 1 (Tm4sf1) from Mus musculus (Mouse).